Reading from the N-terminus, the 551-residue chain is MAGDLSAGFFMEELNTYRQKQGVVLKYQELPNSGPPHDRRFTFQVIIDGREFPEGEGRSKKEAKNAAAKLAVEILNKEKKAVSPLLLTTTNSSEGLSMGNYIGLINRIAQKKRLTVNYEQCASGVHGPEGFHYKCKMGQKEYSIGTGSTKQEAKQLAAKLAYLQILSEETSVKSDYLSSGSFATTCESQSNSLVTSTLASESSSEGDFSADTSEINSNSDSLNSSSLLMNGLRNNQRKAKRSLAPRFDLPDMKETKYTVDKRFGMDFKEIELIGSGGFGQVFKAKHRIDGKTYVIKRVKYNNEKAEREVKALAKLDHVNIVHYNGCWDGFDYDPETSDDSLESSDYDPENSKNSSRSKTKCLFIQMEFCDKGTLEQWIEKRRGEKLDKVLALELFEQITKGVDYIHSKKLIHRDLKPSNIFLVDTKQVKIGDFGLVTSLKNDGKRTRSKGTLRYMSPEQISSQDYGKEVDLYALGLILAELLHVCDTAFETSKFFTDLRDGIISDIFDKKEKTLLQKLLSKKPEDRPNTSEILRTLTVWKKSPEKNERHTC.

An N-acetylalanine modification is found at A2. The interval 2–180 (AGDLSAGFFM…SVKSDYLSSG (179 aa)) is (Microbial infection) Interaction with HCV NS5A. The DRBM 1 domain maps to 9 to 77 (FFMEELNTYR…AKLAVEILNK (69 aa)). K69 participates in a covalent cross-link: Glycyl lysine isopeptide (Lys-Gly) (interchain with G-Cter in ISG15). S83 bears the Phosphoserine mark. Phosphothreonine; by autocatalysis occurs at positions 88, 89, and 90. The DRBM 2 domain maps to 100–167 (NYIGLINRIA…AKLAYLQILS (68 aa)). Y101 carries the post-translational modification Phosphotyrosine; by autocatalysis. K159 is covalently cross-linked (Glycyl lysine isopeptide (Lys-Gly) (interchain with G-Cter in ISG15)). At Y162 the chain carries Phosphotyrosine; by autocatalysis. Positions 202-215 (SSSEGDFSADTSEI) are enriched in polar residues. The interval 202 to 222 (SSSEGDFSADTSEINSNSDSL) is disordered. Residue S242 is modified to Phosphoserine; by autocatalysis. Residues T255 and T258 each carry the phosphothreonine; by autocatalysis modification. The interval 266–362 (DFKEIELIGS…NSSRSKTKCL (97 aa)) is dimerization. The tract at residues 266–551 (DFKEIELIGS…SPEKNERHTC (286 aa)) is interaction with TRAF5. A Protein kinase domain is found at 267 to 538 (FKEIELIGSG…TSEILRTLTV (272 aa)). Position 273–281 (273–281 (IGSGGFGQV)) interacts with ATP. Position 293 is a phosphotyrosine; by autocatalysis (Y293). K296 contacts ATP. 2 consecutive repeat copies span residues 331–343 (DYDPETSDDSLES) and 345–357 (DYDPENSKNSSRS). The 2 X 13 AA approximate repeats stretch occupies residues 331-357 (DYDPETSDDSLESSDYDPENSKNSSRS). Residues 379-496 (EKRRGEKLDK…TAFETSKFFT (118 aa)) are interaction with EIF2S1/EIF-2ALPHA. The active-site Proton acceptor is D414. A Mg(2+)-binding site is contributed by D432. Phosphothreonine; by autocatalysis is present on residues T446 and T451. S456 and S542 each carry phosphoserine.

This sequence belongs to the protein kinase superfamily. Ser/Thr protein kinase family. GCN2 subfamily. Homodimer. Interacts with STRBP. Interacts with DNAJC3. Forms a complex with FANCA, FANCC, FANCG and HSP70. Interacts with ADAR/ADAR1. Interacts with IRS1. The inactive form interacts with NCK1 and GSN. Interacts (via the kinase catalytic domain) with STAT3 (via SH2 domain), TRAF2 (C-terminus), TRAF5 (C-terminus) and TRAF6 (C-terminus). Interacts with MAP2K6, IKBKB/IKKB, NPM1, TARBP2, NLRP1, NLRP3, NLRC4 and AIM2. Interacts (via DRBM 1 domain) with DUS2L (via DRBM domain). Interacts with DHX9 (via N-terminus) and this interaction is dependent upon activation of the kinase. Interacts with EIF2S1/EIF-2ALPHA; this interaction induces a conformational change in EIF2S1 and its phosphorylation by EIF2AK2. As to quaternary structure, (Microbial infection) Interacts with human cytomegalovirus (HCMV) TRS1; this interaction retains EIF2AK2 to the nucleus and prevents its activation. In terms of assembly, (Microbial infection) Interacts with vaccinia virus protein K3 (K3L); this interaction inhibits EIF2AK2. (Microbial infection) Interacts with human herpes simplex virus 1 (HHV-1) protein US11 in an RNA-dependent manner. As to quaternary structure, (Microbial infection) The inactive form interacts with Toscana virus (TOS) NSS. In terms of assembly, (Microbial infection) Interacts with herpes virus 8 protein v-IRF2; this interaction inhibits EIF2AK2 activation. (Microbial infection) Interacts with vaccinia protein E3. As to quaternary structure, (Microbial infection) Interacts (via N-terminus) with Hepatitis C virus (HCV) mature core protein (via N-terminus); this interaction induces the autophosphorylation of EIF2AK2. In terms of assembly, (Microbial infection) Interacts with Hepatitis C virus (HCV) non-structural protein 5A (NS5A); this interaction leads to disruption of EIF2AK2 dimerization by NS5A. (Microbial infection) Interacts with Hepatitis C virus (HCV) envelope glycoprotein E2; this interaction inhibits EIF2AK2 and blocks its inhibitory effect on protein synthesis and cell growth. As to quaternary structure, (Microbial infection) Interacts with human respiratory syncytial virus (HRSV) nucleoprotein; this interaction inhibits EIF2AK2 phosphorylation of EIF2S1 and blocks EIF2AK2-mediated translation shutoff. In terms of assembly, (Microbial infection) Interacts with human herpesvirus 8 protein MTA/ORF57; this interaction inhibits stress granule formation. Mg(2+) is required as a cofactor. Post-translationally, autophosphorylated on several Ser, Thr and Tyr residues. Autophosphorylation of Thr-451 is dependent on Thr-446 and is stimulated by dsRNA binding and dimerization. Autophosphorylation apparently leads to the activation of the kinase. Tyrosine autophosphorylation is essential for efficient dsRNA-binding, dimerization, and kinase activation. In terms of tissue distribution, highly expressed in thymus, spleen and bone marrow compared to non-hematopoietic tissues such as small intestine, liver, or kidney tissues. Colocalizes with GSK3B and TAU in the Alzheimer disease (AD) brain. Elevated levels seen in breast and colon carcinomas, and which correlates with tumor progression and invasiveness or risk of progression.

Its subcellular location is the cytoplasm. The protein localises to the nucleus. The protein resides in the perinuclear region. It carries out the reaction L-seryl-[protein] + ATP = O-phospho-L-seryl-[protein] + ADP + H(+). The catalysed reaction is L-threonyl-[protein] + ATP = O-phospho-L-threonyl-[protein] + ADP + H(+). It catalyses the reaction L-tyrosyl-[protein] + ATP = O-phospho-L-tyrosyl-[protein] + ADP + H(+). Initially produced in an inactive form and is activated by binding to viral dsRNA, which causes dimerization and autophosphorylation in the activation loop and stimulation of function. ISGylation can activate it in the absence of viral infection. Can also be activated by heparin, pro-inflammatory stimuli, growth factors, cytokines, oxidative stress and the cellular protein PRKRA. Activity is markedly stimulated by manganese ions. Activation is blocked by the viral components HIV-1 Tat protein and large amounts of HIV-1 trans-activation response (TAR) RNA element as well as by the cellular proteins TARBP2, DUS2L, NPM1, NCK1 and ADAR. Down-regulated by Toscana virus (TOS) and Rift valley fever virus (RVFV) NSS which promote its proteasomal degradation. Inhibited by vaccinia virus protein E3, probably via dsRNA sequestering. Functionally, IFN-induced dsRNA-dependent serine/threonine-protein kinase that phosphorylates the alpha subunit of eukaryotic translation initiation factor 2 (EIF2S1/eIF-2-alpha) and plays a key role in the innate immune response to viral infection. Inhibits viral replication via the integrated stress response (ISR): EIF2S1/eIF-2-alpha phosphorylation in response to viral infection converts EIF2S1/eIF-2-alpha in a global protein synthesis inhibitor, resulting to a shutdown of cellular and viral protein synthesis, while concomitantly initiating the preferential translation of ISR-specific mRNAs, such as the transcriptional activator ATF4. Exerts its antiviral activity on a wide range of DNA and RNA viruses including hepatitis C virus (HCV), hepatitis B virus (HBV), measles virus (MV) and herpes simplex virus 1 (HHV-1). Also involved in the regulation of signal transduction, apoptosis, cell proliferation and differentiation: phosphorylates other substrates including p53/TP53, PPP2R5A, DHX9, ILF3, IRS1 and the HHV-1 viral protein US11. In addition to serine/threonine-protein kinase activity, also has tyrosine-protein kinase activity and phosphorylates CDK1 at 'Tyr-4' upon DNA damage, facilitating its ubiquitination and proteasomal degradation. Either as an adapter protein and/or via its kinase activity, can regulate various signaling pathways (p38 MAP kinase, NF-kappa-B and insulin signaling pathways) and transcription factors (JUN, STAT1, STAT3, IRF1, ATF3) involved in the expression of genes encoding pro-inflammatory cytokines and IFNs. Activates the NF-kappa-B pathway via interaction with IKBKB and TRAF family of proteins and activates the p38 MAP kinase pathway via interaction with MAP2K6. Can act as both a positive and negative regulator of the insulin signaling pathway (ISP). Negatively regulates ISP by inducing the inhibitory phosphorylation of insulin receptor substrate 1 (IRS1) at 'Ser-312' and positively regulates ISP via phosphorylation of PPP2R5A which activates FOXO1, which in turn up-regulates the expression of insulin receptor substrate 2 (IRS2). Can regulate NLRP3 inflammasome assembly and the activation of NLRP3, NLRP1, AIM2 and NLRC4 inflammasomes. Plays a role in the regulation of the cytoskeleton by binding to gelsolin (GSN), sequestering the protein in an inactive conformation away from actin. This is Interferon-induced, double-stranded RNA-activated protein kinase (EIF2AK2) from Homo sapiens (Human).